Reading from the N-terminus, the 1169-residue chain is Transcription-repair-coupling factor (1169 aa).

Residues 634 to 795 (DMERERPMDR…MLGVRDLSVI (162 aa)) form the Helicase ATP-binding domain. An ATP-binding site is contributed by 647–654 (GDVGYGKT). Residues 748–751 (DEEQ) carry the DEEQ box motif. Residues 809 to 970 (VLEQNSNFIK…GFKIAMRDLN (162 aa)) enclose the Helicase C-terminal domain.

The protein in the N-terminal section; belongs to the UvrB family. It in the C-terminal section; belongs to the helicase family. RecG subfamily.

It localises to the cytoplasm. Its function is as follows. Couples transcription and DNA repair by recognizing RNA polymerase (RNAP) stalled at DNA lesions. Mediates ATP-dependent release of RNAP and its truncated transcript from the DNA, and recruitment of nucleotide excision repair machinery to the damaged site. In Staphylococcus haemolyticus (strain JCSC1435), this protein is Transcription-repair-coupling factor.